We begin with the raw amino-acid sequence, 356 residues long: Serendipity locus protein beta (356 aa).

The C2H2-type 1; degenerate zinc finger occupies 171 to 193 (IPCHICGEMFSSQEVLERHIKAD). C2H2-type zinc fingers lie at residues 201 to 223 (ATCN…MNLH), 229 to 251 (LECR…MEVH), 257 to 279 (YQCD…LMRH), 286 to 308 (LICE…LRTH), and 315 to 337 (YPCP…KRVH).

In terms of assembly, binds chromatin; requires N-terminal regions to form protein-protein contacts, in addition to DNA specific recognition by the zinc fingers.

It localises to the nucleus. In terms of biological role, binds to the consensus DNA sequence 5'-YCAGAGATGCGCA-3'. The polypeptide is Serendipity locus protein beta (Sry-beta) (Drosophila melanogaster (Fruit fly)).